Here is a 304-residue protein sequence, read N- to C-terminus: MNIETNTVPQNLDLAQRVEELAAAAETHDGVAPLSEQFLIGLRDDRLGHRHLLAIEGDEVLGVAALDGQTVELFVGVDNRGRGIGKALVDALPASPQIWAHGNLPAAQALAKRNEMDVVRRLLVMAIEGRDLRAAEEAPTTVDGLEIQTYTESVERFGREHVEAEWVRTNNEAFSWHPEQGGWDLERLHRGMEAEWFDPADVLFLWDSHGGAHSAPTMAGFHWLKWHAEDTPAFGEVYVVGLAEDYRGRGLGGPLLTAGLQRMVEKGADKVILYVEADNDPAVKAYERLGFSIAEEHCVWAKSD.

E36 lines the 1D-myo-inositol 2-(L-cysteinylamino)-2-deoxy-alpha-D-glucopyranoside pocket. Acetyl-CoA is bound at residue 73-75 (LFV). The N-acetyltransferase domain occupies 145–304 (LEIQTYTESV…EEHCVWAKSD (160 aa)). Residues E179, K225, and E236 each contribute to the 1D-myo-inositol 2-(L-cysteinylamino)-2-deoxy-alpha-D-glucopyranoside site. 240-242 (VGL) is a binding site for acetyl-CoA. Y274 lines the 1D-myo-inositol 2-(L-cysteinylamino)-2-deoxy-alpha-D-glucopyranoside pocket. Position 279–284 (279–284 (NDPAVK)) interacts with acetyl-CoA.

Belongs to the acetyltransferase family. MshD subfamily. Monomer.

The catalysed reaction is 1D-myo-inositol 2-(L-cysteinylamino)-2-deoxy-alpha-D-glucopyranoside + acetyl-CoA = mycothiol + CoA + H(+). In terms of biological role, catalyzes the transfer of acetyl from acetyl-CoA to desacetylmycothiol (Cys-GlcN-Ins) to form mycothiol. The protein is Mycothiol acetyltransferase of Corynebacterium aurimucosum (strain ATCC 700975 / DSM 44827 / CIP 107346 / CN-1) (Corynebacterium nigricans).